Consider the following 141-residue polypeptide: Succinate dehydrogenase assembly factor 2, mitochondrial (141 aa).

The protein belongs to the SDHAF2 family. As to quaternary structure, interacts with the flavoprotein subunit within the SDH catalytic dimer.

It localises to the mitochondrion matrix. Its function is as follows. Plays an essential role in the assembly of succinate dehydrogenase (SDH), an enzyme complex (also referred to as respiratory complex II) that is a component of both the tricarboxylic acid (TCA) cycle and the mitochondrial electron transport chain, and which couples the oxidation of succinate to fumarate with the reduction of ubiquinone (coenzyme Q) to ubiquinol. Required for flavinylation (covalent attachment of FAD) of the flavoprotein subunit of the SDH catalytic dimer. The polypeptide is Succinate dehydrogenase assembly factor 2, mitochondrial (Dictyostelium discoideum (Social amoeba)).